The following is a 665-amino-acid chain: MGDILAHESELLGLVKEYLDFAEFEDTLKTFSKECKIKGKPLCKTVGGSFRDSKSLTIQKDLVTAFDNGDQKVFFNLWEEHIPSSVRDGDSFAQRLEFYLHIHFAIYLLKYSVGRPDKEELDEKISYFKTYLETKGAALSQTTEFLPFYALPFVPNPMVHPSFKELFQDSWTPELKMKLEKFLALIFKASNTPKLLTIYKENGQSNKEMLQQLHQQLVEAERRSMTYLKRYNKIQADYHNLIGVTAELVDSLEATVSGKMITPEYLQSVCVRLFSNQMRQSLAHSVDFTRPGTASTMLRASLAPVKLKDVPLLPSLDYEKLKKDLILGSDRLKAFLLQALRWRLTTSHPGEQRETVLQAYISNDLLDCYSHNQRSVLQLLHSKSDVVRQYMARLINAFASLAEGRLYLAQNTKVLRMLEGRLKEEDKDIITRENVLGALQKFSLRRPLQTAMIQDGLIFWLVDVLKDPDCLSDYTLEYSVALLMNLCLRSTGKNMCAKVAGLVLKVLSDLLGHENHEIQPYVSGALYSILSVPSIREEARAMGMEDILRCFIKEGNAEMIRQIEFIIKQLNSEELPDGVLESDDDEDEDDEEDHDIMEADLDKDELIQPQLGELSGEKLLTTEYLGIMTNTGKMRRKGLANVQWSGDEPLQRPVTPGGHRNGYPV.

The LisH domain occupies 7–39 (HESELLGLVKEYLDFAEFEDTLKTFSKECKIKG). The stretch at 201-235 (ENGQSNKEMLQQLHQQLVEAERRSMTYLKRYNKIQ) forms a coiled coil. S582 carries the post-translational modification Phosphoserine. Residues 642-665 (VQWSGDEPLQRPVTPGGHRNGYPV) form a disordered region.

Interacts with TOGARAM1, CCDC66, CEP104, CSPP1 and CEP290. Interacts with NDUFAF2.

It is found in the cytoplasm. The protein resides in the cytoskeleton. It localises to the cilium basal body. Its subcellular location is the cell projection. The protein localises to the cilium. It is found in the microtubule organizing center. The protein resides in the centrosome. It localises to the centriole. Its function is as follows. Involved in ciliogenesis. It is required for appropriate acetylation and polyglutamylation of ciliary microtubules, and regulation of cilium length. Acts as a positive regulator of hedgehog (Hh)signaling. May participate in the trafficking and/or retention of GLI2 and GLI3 proteins at the ciliary tip. This is LisH domain-containing protein ARMC9 (ARMC9) from Pongo abelii (Sumatran orangutan).